Here is a 427-residue protein sequence, read N- to C-terminus: Histidinol dehydrogenase (427 aa).

Substrate contacts are provided by S232, Q254, and H257. The Zn(2+) site is built by Q254 and H257. Active-site proton acceptor residues include E322 and H323. Residues H323, D356, E410, and H415 each contribute to the substrate site. A Zn(2+)-binding site is contributed by D356. H415 contacts Zn(2+).

Belongs to the histidinol dehydrogenase family. The cofactor is Zn(2+).

The catalysed reaction is L-histidinol + 2 NAD(+) + H2O = L-histidine + 2 NADH + 3 H(+). It functions in the pathway amino-acid biosynthesis; L-histidine biosynthesis; L-histidine from 5-phospho-alpha-D-ribose 1-diphosphate: step 9/9. Catalyzes the sequential NAD-dependent oxidations of L-histidinol to L-histidinaldehyde and then to L-histidine. The sequence is that of Histidinol dehydrogenase from Listeria monocytogenes serotype 4b (strain F2365).